The chain runs to 104 residues: L-rhamnose mutarotase (104 aa).

A substrate-binding site is contributed by tyrosine 18. The active-site Proton donor is histidine 22. Residues tyrosine 41 and 76–77 (WW) contribute to the substrate site.

Belongs to the rhamnose mutarotase family. Homodimer.

The protein resides in the cytoplasm. The enzyme catalyses alpha-L-rhamnose = beta-L-rhamnose. The protein operates within carbohydrate metabolism; L-rhamnose metabolism. Its function is as follows. Involved in the anomeric conversion of L-rhamnose. The polypeptide is L-rhamnose mutarotase (Tolumonas auensis (strain DSM 9187 / NBRC 110442 / TA 4)).